Consider the following 131-residue polypeptide: Probable histone H2A.3 (131 aa).

The disordered stretch occupies residues 1-23; that stretch reads MAGRGKQLGSGAAKKSTSRSSKA. Residues 9-23 are compositionally biased toward low complexity; sequence GSGAAKKSTSRSSKA.

It belongs to the histone H2A family. In terms of assembly, the nucleosome is a histone octamer containing two molecules each of H2A, H2B, H3 and H4 assembled in one H3-H4 heterotetramer and two H2A-H2B heterodimers. The octamer wraps approximately 147 bp of DNA. In terms of processing, not ubiquitinated. As to expression, expressed in meristems and dividing cells.

Its subcellular location is the nucleus. The protein localises to the chromosome. Core component of nucleosome. Nucleosomes wrap and compact DNA into chromatin, limiting DNA accessibility to the cellular machineries which require DNA as a template. Histones thereby play a central role in transcription regulation, DNA repair, DNA replication and chromosomal stability. DNA accessibility is regulated via a complex set of post-translational modifications of histones, also called histone code, and nucleosome remodeling. The sequence is that of Probable histone H2A.3 from Arabidopsis thaliana (Mouse-ear cress).